The following is a 241-amino-acid chain: B-cell receptor-associated protein 29 (241 aa).

Residues 1–6 lie on the Lumenal side of the membrane; sequence MTLQWA. A helical membrane pass occupies residues 7-27; the sequence is AVATFLYAEIGLILIFCLPFI. Residues 28 to 43 lie on the Cytoplasmic side of the membrane; it reads PPQRWQKIFSFNVWGK. A helical transmembrane segment spans residues 44–64; the sequence is IATFWNKAFLTIIILLIVLFL. Residues 65-103 are Lumenal-facing; that stretch reads DAVREVRKYSSVHTIEKSSTSRPDAYEHTQMKLFRSQRN. Residues 104-124 traverse the membrane as a helical segment; it reads LYISGFSLFFWLVLRRLVTLI. At 125–241 the chain is on the cytoplasmic side; the sequence is TQLAKELSNK…RLERGNKKRL (117 aa). Residues 166 to 233 are a coiled coil; that stretch reads GKDEECVLEA…KEHSELQDRL (68 aa). Residues 198 to 223 are disordered; that stretch reads LSKAQNDVMEMKMQSERLSKEYDQLL. Residues 206–223 are compositionally biased toward basic and acidic residues; it reads MEMKMQSERLSKEYDQLL. Positions 238–241 match the Di-lysine motif motif; sequence KKRL.

Belongs to the BCAP29/BCAP31 family. Homodimer. Heterodimer with BCAP31. Binds CASP8 (isoform 9) as a complex containing BCAP31, BCAP29, BCL2 and/or BCL2L1. Interacts with VAMP3, VAMP1 and membrane IgD immunoglobulins. May interact with ACTG1 and non-muscle myosin II.

Its subcellular location is the endoplasmic reticulum membrane. May play a role in anterograde transport of membrane proteins from the endoplasmic reticulum to the Golgi. May be involved in CASP8-mediated apoptosis. In Homo sapiens (Human), this protein is B-cell receptor-associated protein 29 (BCAP29).